Consider the following 335-residue polypeptide: N-acetyl-gamma-glutamyl-phosphate reductase (335 aa).

Cysteine 155 is an active-site residue.

The protein belongs to the NAGSA dehydrogenase family. Type 1 subfamily.

Its subcellular location is the cytoplasm. The enzyme catalyses N-acetyl-L-glutamate 5-semialdehyde + phosphate + NADP(+) = N-acetyl-L-glutamyl 5-phosphate + NADPH + H(+). It functions in the pathway amino-acid biosynthesis; L-arginine biosynthesis; N(2)-acetyl-L-ornithine from L-glutamate: step 3/4. Catalyzes the NADPH-dependent reduction of N-acetyl-5-glutamyl phosphate to yield N-acetyl-L-glutamate 5-semialdehyde. The polypeptide is N-acetyl-gamma-glutamyl-phosphate reductase (Pasteurella multocida (strain Pm70)).